Here is a 449-residue protein sequence, read N- to C-terminus: Bifunctional protein GlmU (449 aa).

The tract at residues Met-1–Arg-226 is pyrophosphorylase. UDP-N-acetyl-alpha-D-glucosamine-binding positions include Leu-7–Gly-10, Lys-21, Gln-73, and Gly-78–Thr-79. Residue Asp-103 coordinates Mg(2+). UDP-N-acetyl-alpha-D-glucosamine-binding residues include Gly-140, Glu-155, Asn-170, and Asn-224. Asn-224 contributes to the Mg(2+) binding site. The linker stretch occupies residues Val-227–Ala-247. The N-acetyltransferase stretch occupies residues Gly-248–Ala-449. Arg-329 and Lys-347 together coordinate UDP-N-acetyl-alpha-D-glucosamine. Catalysis depends on His-359, which acts as the Proton acceptor. The UDP-N-acetyl-alpha-D-glucosamine site is built by Tyr-362 and Asn-373. Acetyl-CoA contacts are provided by residues Ala-376, Asn-382–Tyr-383, Ala-419, and Arg-436.

In the N-terminal section; belongs to the N-acetylglucosamine-1-phosphate uridyltransferase family. It in the C-terminal section; belongs to the transferase hexapeptide repeat family. As to quaternary structure, homotrimer. It depends on Mg(2+) as a cofactor.

It localises to the cytoplasm. It carries out the reaction alpha-D-glucosamine 1-phosphate + acetyl-CoA = N-acetyl-alpha-D-glucosamine 1-phosphate + CoA + H(+). It catalyses the reaction N-acetyl-alpha-D-glucosamine 1-phosphate + UTP + H(+) = UDP-N-acetyl-alpha-D-glucosamine + diphosphate. It participates in nucleotide-sugar biosynthesis; UDP-N-acetyl-alpha-D-glucosamine biosynthesis; N-acetyl-alpha-D-glucosamine 1-phosphate from alpha-D-glucosamine 6-phosphate (route II): step 2/2. The protein operates within nucleotide-sugar biosynthesis; UDP-N-acetyl-alpha-D-glucosamine biosynthesis; UDP-N-acetyl-alpha-D-glucosamine from N-acetyl-alpha-D-glucosamine 1-phosphate: step 1/1. It functions in the pathway bacterial outer membrane biogenesis; LPS lipid A biosynthesis. In terms of biological role, catalyzes the last two sequential reactions in the de novo biosynthetic pathway for UDP-N-acetylglucosamine (UDP-GlcNAc). The C-terminal domain catalyzes the transfer of acetyl group from acetyl coenzyme A to glucosamine-1-phosphate (GlcN-1-P) to produce N-acetylglucosamine-1-phosphate (GlcNAc-1-P), which is converted into UDP-GlcNAc by the transfer of uridine 5-monophosphate (from uridine 5-triphosphate), a reaction catalyzed by the N-terminal domain. This is Bifunctional protein GlmU from Thermosynechococcus vestitus (strain NIES-2133 / IAM M-273 / BP-1).